The primary structure comprises 1157 residues: Cyclin-dependent kinase 12 (1157 aa).

The tract at residues 15-540 is disordered; that stretch reads SDVSSEDFSD…RSPTSRDLKH (526 aa). Residues 18–32 are compositionally biased toward acidic residues; it reads SSEDFSDQEAGDLDA. Basic and acidic residues predominate over residues 55 to 76; that stretch reads GRLDAKPDKEGYDNYRSRRAED. Residues 85–94 are compositionally biased toward polar residues; it reads SRQTSSSEAT. Position 106 is a phosphothreonine (T106). Residues 134 to 162 show a composition bias toward basic residues; sequence RQKRKKQKKEKHKHKSKKKSKKRKKKRAK. Positions 163 to 176 are enriched in low complexity; sequence SYSSIDSMSDNDIN. Residue T184 is modified to Phosphothreonine. Polar residues predominate over residues 189 to 215; it reads PSKSNERTVSAAPSSFTPHNLKESSSP. 2 positions are modified to phosphoserine: S190 and S192. At T217 the chain carries Phosphothreonine. Residues 224-255 are compositionally biased toward polar residues; sequence PNTNSNYYGESSLETANSALGSNLQVTVTNKQ. Residues 256–281 are compositionally biased toward low complexity; that stretch reads SISNRLRSPPPSSRSSGNGPRFGNSP. Phosphoserine is present on S280. T283 carries the phosphothreonine modification. 3 positions are modified to phosphoserine: S291, S301, and S314. Residues 315–332 are compositionally biased toward basic and acidic residues; it reads PHKEDVSAHHRSSHDHGY. At S353 the chain carries Phosphoserine. T365 is modified (phosphothreonine). Positions 392-403 are enriched in basic and acidic residues; sequence GKYERYSRDRYS. Residues 408-422 show a composition bias toward low complexity; sequence RSPSVQHSRSRQSPS. Residues 444–468 show a composition bias toward polar residues; that stretch reads TTVSSTPSHTTRTSKRASGTGTSGD. Over residues 473-484 the composition is skewed to low complexity; the sequence is SPRTSSRYMESS. Residues S487 and S492 each carry the phosphoserine modification. Positions 495–508 are enriched in basic residues; that stretch reads HHYHHRRSPRMRQR. Residues 518–533 show a composition bias toward low complexity; that stretch reads PSSASSESSASRSRSP. Phosphoserine is present on S553. Disordered regions lie at residues 574–661 and 675–782; these read ERQE…ADVP and PFSA…QRPV. Positions 586–603 are enriched in polar residues; that stretch reads GALTINDNSSSVDGNTPN. Residues 609–623 show a composition bias toward low complexity; that stretch reads SAPGSGTPAAASTTS. Polar residues-rich tracts occupy residues 644 to 656 and 721 to 731; these read NKQN…NPAS and VTSSGSANKSV. Residues S730, S743, S747, and S755 each carry the phosphoserine modification. A compositionally biased stretch (acidic residues) spans 746 to 760; that stretch reads LSGDDDVIDSPEDFD. Residues 804–1098 form the Protein kinase domain; it reads FEMIAQIGEG…AEDALRSPWL (295 aa). Residues 810 to 818, K833, and 891 to 896 each bind ATP; these read IGEGTYGQV and EYMDHD. D936 functions as the Proton acceptor in the catalytic mechanism. ATP is bound at residue H1118.

The protein belongs to the protein kinase superfamily. CMGC Ser/Thr protein kinase family. CDC2/CDKX subfamily. Interacts with cyclin CycK.

The protein localises to the nucleus. It localises to the chromosome. The enzyme catalyses [DNA-directed RNA polymerase] + ATP = phospho-[DNA-directed RNA polymerase] + ADP + H(+). It catalyses the reaction L-seryl-[protein] + ATP = O-phospho-L-seryl-[protein] + ADP + H(+). The catalysed reaction is L-threonyl-[protein] + ATP = O-phospho-L-threonyl-[protein] + ADP + H(+). Functionally, cyclin-dependent kinase which displays CTD kinase activity: hyperphosphorylates the C-terminal heptapeptide repeat domain (CTD) of the largest RNA polymerase II subunit, thereby acting as a key regulator of transcription elongation. The protein is Cyclin-dependent kinase 12 (Cdk12) of Drosophila melanogaster (Fruit fly).